Here is a 138-residue protein sequence, read N- to C-terminus: Acidic phospholipase A2 Cvv-E6b (138 aa).

The N-terminal stretch at 1 to 16 (MRTLWILAVLLLGVEG) is a signal peptide. 7 cysteine pairs are disulfide-bonded: C42/C131, C44/C60, C59/C111, C65/C138, C66/C104, C73/C97, and C91/C102. Y43, G45, and G47 together coordinate Ca(2+). H63 is an active-site residue. D64 is a binding site for Ca(2+). D105 is an active-site residue.

Ca(2+) is required as a cofactor. As to expression, expressed by the venom gland.

The protein localises to the secreted. It carries out the reaction a 1,2-diacyl-sn-glycero-3-phosphocholine + H2O = a 1-acyl-sn-glycero-3-phosphocholine + a fatty acid + H(+). In terms of biological role, snake venom phospholipase A2 (PLA2) that shows very low inhibition of ADP-induced platelet aggregation in platelet-rich plasma of human, rabbit and guinea pig. PLA2 catalyzes the calcium-dependent hydrolysis of the 2-acyl groups in 3-sn-phosphoglycerides. This chain is Acidic phospholipase A2 Cvv-E6b, found in Crotalus viridis viridis (Prairie rattlesnake).